Consider the following 662-residue polypeptide: uncharacterized protein (662 aa).

Disordered stretches follow at residues 1 to 94 (MSQR…NENN), 107 to 237 (DHNN…VKYH), 288 to 328 (ETTS…TPSA), 406 to 440 (QSSF…PIQM), and 506 to 580 (QNSI…MVSP). Residues 25 to 49 (TTTTTPTPTTTTTTTSSLSSSTSST) show a composition bias toward low complexity. Residues 77-87 (DNIKLDNEKTF) are compositionally biased toward basic and acidic residues. The span at 109 to 161 (NNNNNNNNNNNNNNNNNNNNNNNNNNNNNNNNNNNNNNNNNNNNNNNNNNNNN) shows a compositional bias: low complexity. The span at 162-176 (DTQKGTNKNENNCTD) shows a compositional bias: polar residues. The segment covering 183 to 196 (STSTTSSSETGSST) has biased composition (low complexity). Positions 203 to 212 (KTPQSCLKKS) are enriched in polar residues. Low complexity predominate over residues 213-224 (NNNNNDNNNNNN). A compositionally biased stretch (basic residues) spans 226–235 (KTPRSTKKVK). Low complexity-rich tracts occupy residues 288 to 308 (ETTS…TPIP), 413 to 434 (PTNN…TTTP), 515 to 526 (PTKSSSSTSIQQ), and 535 to 575 (NINN…NNNN).

This is an uncharacterized protein from Dictyostelium discoideum (Social amoeba).